Consider the following 309-residue polypeptide: 5-oxoprolinase subunit C (309 aa).

This sequence belongs to the PxpC family. In terms of assembly, forms a complex composed of PxpA, PxpB and PxpC.

The catalysed reaction is 5-oxo-L-proline + ATP + 2 H2O = L-glutamate + ADP + phosphate + H(+). Functionally, catalyzes the cleavage of 5-oxoproline to form L-glutamate coupled to the hydrolysis of ATP to ADP and inorganic phosphate. In Haemophilus influenzae (strain ATCC 51907 / DSM 11121 / KW20 / Rd), this protein is 5-oxoprolinase subunit C.